The sequence spans 101 residues: NADH-quinone oxidoreductase subunit K (101 aa).

Helical transmembrane passes span 4–24 (LEHY…GLFL), 30–50 (IVLL…LVAF), and 65–85 (FVLT…VCFF).

The protein belongs to the complex I subunit 4L family. NDH-1 is composed of 14 different subunits. Subunits NuoA, H, J, K, L, M, N constitute the membrane sector of the complex.

Its subcellular location is the cell inner membrane. It carries out the reaction a quinone + NADH + 5 H(+)(in) = a quinol + NAD(+) + 4 H(+)(out). NDH-1 shuttles electrons from NADH, via FMN and iron-sulfur (Fe-S) centers, to quinones in the respiratory chain. The immediate electron acceptor for the enzyme in this species is believed to be ubiquinone. Couples the redox reaction to proton translocation (for every two electrons transferred, four hydrogen ions are translocated across the cytoplasmic membrane), and thus conserves the redox energy in a proton gradient. In Ruegeria pomeroyi (strain ATCC 700808 / DSM 15171 / DSS-3) (Silicibacter pomeroyi), this protein is NADH-quinone oxidoreductase subunit K.